A 336-amino-acid polypeptide reads, in one-letter code: Flap endonuclease 1 (336 aa).

The interval 1–98 is N-domain; that stretch reads MGADIGDLFE…AEIEERKKRR (98 aa). Residues Asp-27, Asp-80, Glu-151, Glu-153, Asp-172, Asp-174, and Asp-235 each coordinate Mg(2+). An I-domain region spans residues 115–256; it reads DAKKYAQAAG…KALNYIKTYG (142 aa). The segment at 328 to 336 is interaction with PCNA; the sequence is TQATLERWF.

Belongs to the XPG/RAD2 endonuclease family. FEN1 subfamily. In terms of assembly, interacts with PCNA. PCNA stimulates the nuclease activity without altering cleavage specificity. Mg(2+) serves as cofactor.

Functionally, structure-specific nuclease with 5'-flap endonuclease and 5'-3' exonuclease activities involved in DNA replication and repair. During DNA replication, cleaves the 5'-overhanging flap structure that is generated by displacement synthesis when DNA polymerase encounters the 5'-end of a downstream Okazaki fragment. Binds the unpaired 3'-DNA end and kinks the DNA to facilitate 5' cleavage specificity. Cleaves one nucleotide into the double-stranded DNA from the junction in flap DNA, leaving a nick for ligation. Also involved in the base excision repair (BER) pathway. Acts as a genome stabilization factor that prevents flaps from equilibrating into structures that lead to duplications and deletions. Also possesses 5'-3' exonuclease activity on nicked or gapped double-stranded DNA. This chain is Flap endonuclease 1, found in Archaeoglobus fulgidus (strain ATCC 49558 / DSM 4304 / JCM 9628 / NBRC 100126 / VC-16).